Here is a 308-residue protein sequence, read N- to C-terminus: Apolipoprotein F (308 aa).

Belongs to the apolipoprotein F family.

The protein localises to the secreted. Its function is as follows. Minor apolipoprotein that associates with LDL. Inhibits cholesteryl ester transfer protein (CETP) activity and appears to be an important regulator of cholesterol transport. Also associates to a lesser degree with VLDL, Apo-AI and Apo-AII. The protein is Apolipoprotein F (Apof) of Rattus norvegicus (Rat).